We begin with the raw amino-acid sequence, 392 residues long: Xylose operon regulatory protein (392 aa).

One can recognise an HTH araC/xylS-type domain in the interval Ile-288–Val-386. DNA-binding regions (H-T-H motif) lie at residues Asp-305–Val-326 and Ile-353–Tyr-376.

Its function is as follows. Regulatory protein for the xylBAFGHR operon. The protein is Xylose operon regulatory protein (xylR) of Escherichia coli O157:H7.